Consider the following 353-residue polypeptide: F-box protein At2g14290 (353 aa).

Residues 6–58 (PRTWSELPPDLLGSIFHRLSFTDFHRAKIVCWNWNLSSKLTVPKKIRSPWLML) enclose the F-box domain.

The protein is F-box protein At2g14290 of Arabidopsis thaliana (Mouse-ear cress).